The following is a 487-amino-acid chain: Glutamyl-tRNA(Gln) amidotransferase subunit A (487 aa).

Active-site charge relay system residues include lysine 75 and serine 150. Residue serine 174 is the Acyl-ester intermediate of the active site.

The protein belongs to the amidase family. GatA subfamily. In terms of assembly, heterotrimer of A, B and C subunits.

It carries out the reaction L-glutamyl-tRNA(Gln) + L-glutamine + ATP + H2O = L-glutaminyl-tRNA(Gln) + L-glutamate + ADP + phosphate + H(+). In terms of biological role, allows the formation of correctly charged Gln-tRNA(Gln) through the transamidation of misacylated Glu-tRNA(Gln) in organisms which lack glutaminyl-tRNA synthetase. The reaction takes place in the presence of glutamine and ATP through an activated gamma-phospho-Glu-tRNA(Gln). The sequence is that of Glutamyl-tRNA(Gln) amidotransferase subunit A from Syntrophomonas wolfei subsp. wolfei (strain DSM 2245B / Goettingen).